The chain runs to 220 residues: Guanylate kinase (220 aa).

Residues 16–195 enclose the Guanylate kinase-like domain; sequence GLMFVLSSPS…AFESVRSILR (180 aa). Position 23 to 30 (23 to 30) interacts with ATP; sequence SPSGAGKT.

It belongs to the guanylate kinase family.

It is found in the cytoplasm. It catalyses the reaction GMP + ATP = GDP + ADP. Functionally, essential for recycling GMP and indirectly, cGMP. The protein is Guanylate kinase of Rhodopseudomonas palustris (strain ATCC BAA-98 / CGA009).